A 175-amino-acid chain; its full sequence is ATP synthase subunit delta (175 aa).

The protein belongs to the ATPase delta chain family. In terms of assembly, F-type ATPases have 2 components, F(1) - the catalytic core - and F(0) - the membrane proton channel. F(1) has five subunits: alpha(3), beta(3), gamma(1), delta(1), epsilon(1). F(0) has three main subunits: a(1), b(2) and c(10-14). The alpha and beta chains form an alternating ring which encloses part of the gamma chain. F(1) is attached to F(0) by a central stalk formed by the gamma and epsilon chains, while a peripheral stalk is formed by the delta and b chains.

It localises to the cell inner membrane. In terms of biological role, f(1)F(0) ATP synthase produces ATP from ADP in the presence of a proton or sodium gradient. F-type ATPases consist of two structural domains, F(1) containing the extramembraneous catalytic core and F(0) containing the membrane proton channel, linked together by a central stalk and a peripheral stalk. During catalysis, ATP synthesis in the catalytic domain of F(1) is coupled via a rotary mechanism of the central stalk subunits to proton translocation. Functionally, this protein is part of the stalk that links CF(0) to CF(1). It either transmits conformational changes from CF(0) to CF(1) or is implicated in proton conduction. In Xanthomonas oryzae pv. oryzae (strain MAFF 311018), this protein is ATP synthase subunit delta.